We begin with the raw amino-acid sequence, 404 residues long: Multidrug resistance protein MdtG (404 aa).

11 helical membrane-spanning segments follow: residues 19 to 39 (LGCF…PLYV), 56 to 76 (LVFS…GGLA), 90 to 110 (LGMA…QFLI), 113 to 133 (ALLG…ATQV), 144 to 164 (TLST…GLLA), 171 to 191 (PVFF…FFFI), 222 to 242 (LFVT…ILTL), 254 to 274 (IAFI…LSAP), 288 to 308 (ILIV…FVQT), 317 to 337 (FLLG…LVYN), and 376 to 396 (AVFC…WNSL).

This sequence belongs to the major facilitator superfamily. DHA1 family. MdtG (TC 2.A.1.2.20) subfamily.

It is found in the cell inner membrane. In Salmonella dublin (strain CT_02021853), this protein is Multidrug resistance protein MdtG.